The primary structure comprises 784 residues: LPS-assembly protein LptD (784 aa).

Residues 1-24 form the signal peptide; the sequence is MKKRIPTLLATMIATALYSQQGLA. Cystine bridges form between Cys31-Cys724 and Cys173-Cys725.

Belongs to the LptD family. In terms of assembly, component of the lipopolysaccharide transport and assembly complex. Interacts with LptE and LptA. Contains two intramolecular disulfide bonds.

It localises to the cell outer membrane. In terms of biological role, together with LptE, is involved in the assembly of lipopolysaccharide (LPS) at the surface of the outer membrane. In Shigella dysenteriae serotype 1 (strain Sd197), this protein is LPS-assembly protein LptD.